The following is a 344-amino-acid chain: Autophagy-related protein 14 (344 aa).

A cysteine repeats region spans residues 3–18 (CPICHHRAHVVYCAHC). Residues 25–156 (LLLKLKLDLI…VSKICESARD (132 aa)) are a coiled coil.

It belongs to the ATG14 family. Component of the autophagy-specific VPS34 PI3-kinase complex I composed of VPS15, VPS30, VPS34, ATG14 and ATG38. Interacts directly with ATG38.

The protein localises to the preautophagosomal structure membrane. It localises to the vacuole membrane. Required for cytoplasm to vacuole transport (Cvt) and autophagy as a part of the autophagy-specific VPS34 PI3-kinase complex I. This complex is essential to recruit the ATG8-phosphatidylinositol conjugate and the ATG12-ATG5 conjugate to the pre-autophagosomal structure. ATG14 mediates the specific binding of the VPS34 PI3-kinase complex I to the preautophagosomal structure (PAS). The polypeptide is Autophagy-related protein 14 (ATG14) (Saccharomyces cerevisiae (strain ATCC 204508 / S288c) (Baker's yeast)).